The following is a 777-amino-acid chain: Beta-hexosaminidase (777 aa).

The N-terminal stretch at 1–18 (MKRLTFGACICCLLSLMA) is a signal peptide. Cys-19 carries N-palmitoyl cysteine lipidation. A lipid anchor (S-diacylglycerol cysteine) is attached at Cys-19. Positions 625–766 (APKPGLTIRT…VMIRLKGEEK (142 aa)) constitute a PA14 domain.

This sequence belongs to the glycosyl hydrolase 20 family.

The protein resides in the cell outer membrane. It carries out the reaction Hydrolysis of terminal non-reducing N-acetyl-D-hexosamine residues in N-acetyl-beta-D-hexosaminides.. In Porphyromonas gingivalis (strain ATCC BAA-308 / W83), this protein is Beta-hexosaminidase (nahA).